Consider the following 535-residue polypeptide: Protein PyrBI (535 aa).

Residues 1-341 (MENKFMGRSL…MIAGKIGDDY (341 aa)) are aspartate carbamoyltransferase. The linker stretch occupies residues 342-370 (KGPEPKSCERVEDEDYIVEVPINNSKESK). The segment at 371-535 (VETFSEGVRP…FKEIWGEKKN (165 aa)) is aspartate carbamoyltransferase regulatory region. The Zn(2+) site is built by Cys488, Cys493, Cys517, and Cys520.

The protein in the N-terminal section; belongs to the aspartate/ornithine carbamoyltransferase superfamily. ATCase family. This sequence in the C-terminal section; belongs to the PyrI family.

The enzyme catalyses carbamoyl phosphate + L-aspartate = N-carbamoyl-L-aspartate + phosphate + H(+). The protein operates within pyrimidine metabolism; UMP biosynthesis via de novo pathway; (S)-dihydroorotate from bicarbonate: step 2/3. This Treponema denticola (strain ATCC 35405 / DSM 14222 / CIP 103919 / JCM 8153 / KCTC 15104) protein is Protein PyrBI (pyrBI).